The primary structure comprises 596 residues: Two-component response regulator ARR12 (596 aa).

Residues 18–133 (RVLAVDDDQT…ELKNIWQHVV (116 aa)) enclose the Response regulatory domain. The residue at position 69 (D69) is a 4-aspartylphosphate. Basic and acidic residues predominate over residues 138 to 153 (DKNRGSNNNGDKRDGS). Residues 138 to 192 (DKNRGSNNNGDKRDGSGNEGVGNSDQNNGKGNRKRKDQYNEDEDEDRDDNDDSCA) are disordered. Positions 158 to 167 (VGNSDQNNGK) are enriched in polar residues. The segment covering 177 to 189 (NEDEDEDRDDNDD) has biased composition (acidic residues). Residues 194-197 (KKQR) carry the Nuclear localization signal motif. The segment at residues 197–247 (RVVWTVELHKKFVAAVNQLGYEKAMPKKILDLMNVEKLTRENVASHLQKFR) is a DNA-binding region (myb-like GARP). The disordered stretch occupies residues 437-467 (NAVSSSTHPPPPAHNSNSINHQFDVSPLPHS). The span at 450 to 459 (HNSNSINHQF) shows a compositional bias: polar residues.

Belongs to the ARR family. Type-B subfamily. Binds the target DNA as a monomer. Post-translationally, two-component system major event consists of a His-to-Asp phosphorelay between a sensor histidine kinase (HK) and a response regulator (RR). In plants, the His-to-Asp phosphorelay involves an additional intermediate named Histidine-containing phosphotransfer protein (HPt). This multistep phosphorelay consists of a His-Asp-His-Asp sequential transfer of a phosphate group between first a His and an Asp of the HK protein, followed by the transfer to a conserved His of the HPt protein and finally the transfer to an Asp in the receiver domain of the RR protein. In terms of tissue distribution, detected in the whole plant. Predominantly expressed in leaves. Expressed at the root transition zone.

It localises to the nucleus. Its function is as follows. Transcriptional activator that binds specifically to the DNA sequence 5'-[AG]GATT-3'. Functions as a response regulator involved in His-to-Asp phosphorelay signal transduction system. Phosphorylation of the Asp residue in the receiver domain activates the ability of the protein to promote the transcription of target genes. Could directly activate some type-A response regulators in response to cytokinins. Involved in the root-meristem size determination through the regulation of cell differentiation. Involved in activating SHY2 during meristem growth and controls PIN expression via activation of SHY2. This chain is Two-component response regulator ARR12 (ARR12), found in Arabidopsis thaliana (Mouse-ear cress).